A 323-amino-acid chain; its full sequence is tRNA U34 carboxymethyltransferase (323 aa).

Carboxy-S-adenosyl-L-methionine-binding positions include Lys-91, Trp-105, Lys-110, Gly-130, 181–182, Met-196, Tyr-200, and Arg-315; that span reads IE.

It belongs to the class I-like SAM-binding methyltransferase superfamily. CmoB family. In terms of assembly, homotetramer.

It catalyses the reaction carboxy-S-adenosyl-L-methionine + 5-hydroxyuridine(34) in tRNA = 5-carboxymethoxyuridine(34) in tRNA + S-adenosyl-L-homocysteine + H(+). In terms of biological role, catalyzes carboxymethyl transfer from carboxy-S-adenosyl-L-methionine (Cx-SAM) to 5-hydroxyuridine (ho5U) to form 5-carboxymethoxyuridine (cmo5U) at position 34 in tRNAs. This Yersinia pseudotuberculosis serotype O:3 (strain YPIII) protein is tRNA U34 carboxymethyltransferase.